Here is a 422-residue protein sequence, read N- to C-terminus: Elongation factor 1-alpha (422 aa).

Positions 5 to 221 (KPHMNLAVIG…NNLKVPEKPS (217 aa)) constitute a tr-type G domain. The G1 stretch occupies residues 14 to 21 (GHIDHGKS). Residue 14-21 (GHIDHGKS) participates in GTP binding. Serine 21 contacts Mg(2+). A G2 region spans residues 70–74 (GITID). The segment at 91–94 (DCPG) is G3. Residues 91–95 (DCPGH) and 146–149 (NKMD) contribute to the GTP site. The tract at residues 146 to 149 (NKMD) is G4. The tract at residues 185-187 (SAF) is G5.

Belongs to the TRAFAC class translation factor GTPase superfamily. Classic translation factor GTPase family. EF-Tu/EF-1A subfamily.

Its subcellular location is the cytoplasm. It catalyses the reaction GTP + H2O = GDP + phosphate + H(+). Functionally, GTP hydrolase that promotes the GTP-dependent binding of aminoacyl-tRNA to the A-site of ribosomes during protein biosynthesis. The protein is Elongation factor 1-alpha of Methanosarcina barkeri (strain Fusaro / DSM 804).